The primary structure comprises 272 residues: Homeobox protein Hox-D12 (272 aa).

Positions 204 to 263 (SRRKRKPYTKQQIAELENEFLANEFINRQKRKELSDRLNLSDQQVKIWFQNRRMKKKRLV) form a DNA-binding region, homeobox.

Belongs to the Abd-B homeobox family.

The protein resides in the nucleus. Its function is as follows. Sequence-specific transcription factor which is part of a developmental regulatory system that provides cells with specific positional identities on the anterior-posterior axis. The sequence is that of Homeobox protein Hox-D12 (HOXD12) from Heterodontus francisci (Horn shark).